The primary structure comprises 283 residues: NADPH-dependent 7-cyano-7-deazaguanine reductase (283 aa).

90-92 lines the substrate pocket; that stretch reads IES. 92-93 is an NADPH binding site; that stretch reads SK. The Thioimide intermediate role is filled by C190. Catalysis depends on D197, which acts as the Proton donor. A substrate-binding site is contributed by 229 to 230; the sequence is HE. Residue 258-259 coordinates NADPH; the sequence is RG.

It belongs to the GTP cyclohydrolase I family. QueF type 2 subfamily. In terms of assembly, homodimer.

It localises to the cytoplasm. The enzyme catalyses 7-aminomethyl-7-carbaguanine + 2 NADP(+) = 7-cyano-7-deazaguanine + 2 NADPH + 3 H(+). It functions in the pathway tRNA modification; tRNA-queuosine biosynthesis. Functionally, catalyzes the NADPH-dependent reduction of 7-cyano-7-deazaguanine (preQ0) to 7-aminomethyl-7-deazaguanine (preQ1). The sequence is that of NADPH-dependent 7-cyano-7-deazaguanine reductase from Dechloromonas aromatica (strain RCB).